The chain runs to 225 residues: GTP cyclohydrolase III (225 aa).

The protein belongs to the archaeal-type GTP cyclohydrolase family.

The catalysed reaction is GTP + 3 H2O = 2-amino-5-formylamino-6-(5-phospho-D-ribosylamino)pyrimidin-4(3H)-one + 2 phosphate + 2 H(+). Its function is as follows. Catalyzes the formation of 2-amino-5-formylamino-6-ribofuranosylamino-4(3H)-pyrimidinone ribonucleotide monophosphate and inorganic phosphate from GTP. Also has an independent pyrophosphate phosphohydrolase activity. The sequence is that of GTP cyclohydrolase III from Sulfurisphaera tokodaii (strain DSM 16993 / JCM 10545 / NBRC 100140 / 7) (Sulfolobus tokodaii).